The following is a 324-amino-acid chain: Pepsin-2B (324 aa).

The region spanning 14-321 is the Peptidase A1 domain; the sequence is YYGVISIGTP…DRTNNKVGFA (308 aa). Asp-32 is an active-site residue. A disulfide bond links Cys-45 and Cys-50. The segment at 86–109 is disordered; that stretch reads QDTVSVGGGSDPNQELGESQTEPG. Residues 96-107 show a composition bias toward polar residues; the sequence is DPNQELGESQTE. The cysteines at positions 206 and 209 are disulfide-linked. Asp-214 is a catalytic residue. A disulfide bridge links Cys-247 with Cys-280.

This sequence belongs to the peptidase A1 family.

In Gadus morhua (Atlantic cod), this protein is Pepsin-2B.